The primary structure comprises 382 residues: uncharacterized protein (382 aa).

12 consecutive transmembrane segments (helical) span residues 8 to 28 (VLLL…LNTL), 39 to 61 (PTWQ…TLLT), 75 to 95 (YLAS…VGFW), 102 to 122 (FIAG…LMCS), 131 to 151 (LLAA…LMIS), 157 to 177 (LMSV…PLLF), 204 to 224 (LGVN…GLMP), 236 to 256 (GIGF…WPIG), 265 to 284 (LLVL…AMLG), 289 to 311 (APAL…AWAC), 325 to 345 (ALLL…AMLM), and 349 to 369 (SDNL…LMLL).

The protein belongs to the major facilitator superfamily. YcaD (TC 2.A.1.26) family.

Its subcellular location is the cell inner membrane. This is an uncharacterized protein from Enterobacter sp. (strain 638).